A 101-amino-acid polypeptide reads, in one-letter code: Small ribosomal subunit protein uS14 (101 aa).

It belongs to the universal ribosomal protein uS14 family. Part of the 30S ribosomal subunit. Contacts proteins S3 and S10.

Its function is as follows. Binds 16S rRNA, required for the assembly of 30S particles and may also be responsible for determining the conformation of the 16S rRNA at the A site. In Cupriavidus pinatubonensis (strain JMP 134 / LMG 1197) (Cupriavidus necator (strain JMP 134)), this protein is Small ribosomal subunit protein uS14.